A 338-amino-acid polypeptide reads, in one-letter code: Methionine import ATP-binding protein MetN 2 (338 aa).

One can recognise an ABC transporter domain in the interval 2–242; sequence IEIEKVCVDF…PQHAFTQQLV (241 aa). 39–46 provides a ligand contact to ATP; it reads GTSGAGKS.

It belongs to the ABC transporter superfamily. Methionine importer (TC 3.A.1.24) family. The complex is composed of two ATP-binding proteins (MetN), two transmembrane proteins (MetI) and a solute-binding protein (MetQ).

The protein resides in the cell inner membrane. It carries out the reaction L-methionine(out) + ATP + H2O = L-methionine(in) + ADP + phosphate + H(+). The enzyme catalyses D-methionine(out) + ATP + H2O = D-methionine(in) + ADP + phosphate + H(+). In terms of biological role, part of the ABC transporter complex MetNIQ involved in methionine import. Responsible for energy coupling to the transport system. This Salmonella choleraesuis (strain SC-B67) protein is Methionine import ATP-binding protein MetN 2.